The following is a 316-amino-acid chain: Transaldolase A (316 aa).

Lys-131 serves as the catalytic Schiff-base intermediate with substrate.

It belongs to the transaldolase family. Type 1 subfamily. As to quaternary structure, homodimer.

The protein resides in the cytoplasm. It catalyses the reaction D-sedoheptulose 7-phosphate + D-glyceraldehyde 3-phosphate = D-erythrose 4-phosphate + beta-D-fructose 6-phosphate. Its pathway is carbohydrate degradation; pentose phosphate pathway; D-glyceraldehyde 3-phosphate and beta-D-fructose 6-phosphate from D-ribose 5-phosphate and D-xylulose 5-phosphate (non-oxidative stage): step 2/3. Functionally, transaldolase is important for the balance of metabolites in the pentose-phosphate pathway. The polypeptide is Transaldolase A (talA) (Escherichia coli O157:H7).